Here is a 125-residue protein sequence, read N- to C-terminus: UPF0102 protein Mpop_0474 (125 aa).

This sequence belongs to the UPF0102 family.

This chain is UPF0102 protein Mpop_0474, found in Methylorubrum populi (strain ATCC BAA-705 / NCIMB 13946 / BJ001) (Methylobacterium populi).